The chain runs to 274 residues: Outer surface protein A (274 aa).

The N-terminal stretch at 1–16 (MKKYLLGIGLILALIA) is a signal peptide. C17 carries the N-palmitoyl cysteine lipid modification. C17 carries S-diacylglycerol cysteine lipidation.

It belongs to the OspA lipoprotein family.

It is found in the cell outer membrane. Its subcellular location is the cell surface. This chain is Outer surface protein A, found in Borreliella burgdorferi (Lyme disease spirochete).